The primary structure comprises 252 residues: Phosphoribosylformylglycinamidine synthase subunit PurQ (252 aa).

Residues 6-237 (VGVVVFPGSN…FAHLAGTKRS (232 aa)) form the Glutamine amidotransferase type-1 domain. Cys-89 serves as the catalytic Nucleophile. Active-site residues include His-206 and Glu-208.

Part of the FGAM synthase complex composed of 1 PurL, 1 PurQ and 2 PurS subunits.

The protein resides in the cytoplasm. The catalysed reaction is N(2)-formyl-N(1)-(5-phospho-beta-D-ribosyl)glycinamide + L-glutamine + ATP + H2O = 2-formamido-N(1)-(5-O-phospho-beta-D-ribosyl)acetamidine + L-glutamate + ADP + phosphate + H(+). It carries out the reaction L-glutamine + H2O = L-glutamate + NH4(+). It participates in purine metabolism; IMP biosynthesis via de novo pathway; 5-amino-1-(5-phospho-D-ribosyl)imidazole from N(2)-formyl-N(1)-(5-phospho-D-ribosyl)glycinamide: step 1/2. Part of the phosphoribosylformylglycinamidine synthase complex involved in the purines biosynthetic pathway. Catalyzes the ATP-dependent conversion of formylglycinamide ribonucleotide (FGAR) and glutamine to yield formylglycinamidine ribonucleotide (FGAM) and glutamate. The FGAM synthase complex is composed of three subunits. PurQ produces an ammonia molecule by converting glutamine to glutamate. PurL transfers the ammonia molecule to FGAR to form FGAM in an ATP-dependent manner. PurS interacts with PurQ and PurL and is thought to assist in the transfer of the ammonia molecule from PurQ to PurL. The chain is Phosphoribosylformylglycinamidine synthase subunit PurQ from Chlorobaculum parvum (strain DSM 263 / NCIMB 8327) (Chlorobium vibrioforme subsp. thiosulfatophilum).